Consider the following 525-residue polypeptide: Nucleolar and spindle-associated protein 1-C (525 aa).

Disordered regions lie at residues 43–203 (FYPE…KKLH), 250–293 (TPVS…FSAA), 373–398 (TPES…EKAK), and 452–525 (LSRP…VPVQ). Positions 58 to 69 (SSLTDTDELNSS) are enriched in polar residues. The span at 82–92 (THRRGRGRKPL) shows a compositional bias: basic residues. The segment covering 93 to 102 (KNHDTPKDEF) has biased composition (basic and acidic residues). Residues 113 to 127 (SLASETDNTQHQNCL) are compositionally biased toward polar residues. Positions 160–169 (TTEKRQKKAS) are enriched in basic and acidic residues. The span at 270–285 (PPTTGASPSRTPTNQR) shows a compositional bias: polar residues. Polar residues predominate over residues 476 to 494 (CGSNNNVSVLKNNFKQPHL). The segment covering 495 to 514 (QTREDRRKQHEQDRKGKRDQ) has biased composition (basic and acidic residues).

The protein belongs to the NUSAP family. In terms of assembly, interacts with DNA, microtubules, ipo7, kpna2 and kpnb1. Microtubule stabilization is inhibited by ipo7 and kpna2, while microtubule bundling is inhibited by kpnb1. Active GTP-bound ran causes dissociation of ipo7 and kpnb1.

It is found in the cytoplasm. The protein localises to the nucleus. Its subcellular location is the cytoskeleton. The protein resides in the spindle. Microtubule-associated protein with the capacity to bundle and stabilize microtubules. May associate with chromosomes and promote the organization of meiotic or mitotic spindle microtubules around them. The chain is Nucleolar and spindle-associated protein 1-C (nusap1-c) from Xenopus laevis (African clawed frog).